The chain runs to 404 residues: UBP1-associated protein 2C (404 aa).

The interval 1–29 (MDMMKKRKLDENGNGLNTNGGGTIGPTRL) is disordered. 2 RRM domains span residues 75–152 (RKLF…LAAS) and 167–248 (RKIY…GKKG). Disordered stretches follow at residues 246-270 (KKGG…HGEG) and 344-404 (GSGQ…PPNY).

As to expression, expressed in root apical and lateral meristems, young leaves and embryos.

The protein localises to the nucleus. Its function is as follows. Heterogeneous nuclear ribonucleoprotein (hnRNP)-like protein that acts as a component of a complex regulating the turnover of mRNAs in the nucleus. Binds with high affinity to RNA molecules that contain U-rich sequences in 3'-UTRs. May function in complex with UBP1 and contribute to the stabilization of mRNAs in the nucleus. The chain is UBP1-associated protein 2C (UBA2C) from Arabidopsis thaliana (Mouse-ear cress).